The primary structure comprises 447 residues: Methylenetetrahydrofolate--tRNA-(uracil-5-)-methyltransferase TrmFO (447 aa).

An FAD-binding site is contributed by 13 to 18 (GAGLAG).

Belongs to the MnmG family. TrmFO subfamily. FAD is required as a cofactor.

It localises to the cytoplasm. The enzyme catalyses uridine(54) in tRNA + (6R)-5,10-methylene-5,6,7,8-tetrahydrofolate + NADH + H(+) = 5-methyluridine(54) in tRNA + (6S)-5,6,7,8-tetrahydrofolate + NAD(+). The catalysed reaction is uridine(54) in tRNA + (6R)-5,10-methylene-5,6,7,8-tetrahydrofolate + NADPH + H(+) = 5-methyluridine(54) in tRNA + (6S)-5,6,7,8-tetrahydrofolate + NADP(+). Catalyzes the folate-dependent formation of 5-methyl-uridine at position 54 (M-5-U54) in all tRNAs. In Streptococcus thermophilus (strain ATCC BAA-491 / LMD-9), this protein is Methylenetetrahydrofolate--tRNA-(uracil-5-)-methyltransferase TrmFO.